Here is a 259-residue protein sequence, read N- to C-terminus: MASTSVAAAEVKAQTTQAEEPVKVVRHQEVGHKSLLQSDALYQYILETSVYPREPEPMKELPRVTAKHPWNLMTTSADEGQFLGLLLKLINAKNTMEIGVYTGYSLLSTALALPDDGKILAMDINRENYDIGLPIIEKAGVAHKIDFREGPALPVLDELLKNEDMHGSFDFVFVDRDKDNYLNYHKRLIDLVKVGGLIAYDNTLWNGSVVAPPDAPLRKYVRYYRDFVMELNKALAVDPRIEISQIPVLDGVTLCRRVY.

Lysine 33 contacts substrate. S-adenosyl-L-methionine is bound by residues threonine 75, glutamate 97, 99-100 (GV), serine 105, aspartate 123, and alanine 152. Aspartate 175 provides a ligand contact to substrate. Aspartate 175 contributes to the a divalent metal cation binding site. Position 177 (aspartate 177) interacts with S-adenosyl-L-methionine. Positions 201 and 202 each coordinate a divalent metal cation. Residue asparagine 206 coordinates substrate.

The protein belongs to the class I-like SAM-binding methyltransferase superfamily. Cation-dependent O-methyltransferase family. CCoAMT subfamily. It depends on a divalent metal cation as a cofactor.

It carries out the reaction (E)-caffeoyl-CoA + S-adenosyl-L-methionine = (E)-feruloyl-CoA + S-adenosyl-L-homocysteine + H(+). Its pathway is aromatic compound metabolism; phenylpropanoid biosynthesis. In terms of biological role, methylates caffeoyl-CoA to feruloyl-CoA and 5-hydroxyferuloyl-CoA to sinapoyl-CoA. Plays a role in the synthesis of feruloylated polysaccharides. Involved in the reinforcement of the plant cell wall. Also involved in the responding to wounding or pathogen challenge by the increased formation of cell wall-bound ferulic acid polymers. This Pinus taeda (Loblolly pine) protein is Caffeoyl-CoA O-methyltransferase (CCOAOMT).